The sequence spans 302 residues: Pyridoxal 5'-phosphate synthase subunit PdxS (302 aa).

D32 is a D-ribose 5-phosphate binding site. The Schiff-base intermediate with D-ribose 5-phosphate role is filled by K89. G161 is a binding site for D-ribose 5-phosphate. R173 contacts D-glyceraldehyde 3-phosphate. Residues G222 and 243–244 each bind D-ribose 5-phosphate; that span reads GS. Residues 276-302 are disordered; the sequence is ASNPGKGMKGEANADLSEGEKLQTRGV. The span at 293–302 shows a compositional bias: basic and acidic residues; the sequence is EGEKLQTRGV.

The protein belongs to the PdxS/SNZ family. In terms of assembly, in the presence of PdxT, forms a dodecamer of heterodimers.

It catalyses the reaction aldehydo-D-ribose 5-phosphate + D-glyceraldehyde 3-phosphate + L-glutamine = pyridoxal 5'-phosphate + L-glutamate + phosphate + 3 H2O + H(+). The protein operates within cofactor biosynthesis; pyridoxal 5'-phosphate biosynthesis. Functionally, catalyzes the formation of pyridoxal 5'-phosphate from ribose 5-phosphate (RBP), glyceraldehyde 3-phosphate (G3P) and ammonia. The ammonia is provided by the PdxT subunit. Can also use ribulose 5-phosphate and dihydroxyacetone phosphate as substrates, resulting from enzyme-catalyzed isomerization of RBP and G3P, respectively. The polypeptide is Pyridoxal 5'-phosphate synthase subunit PdxS (Haloquadratum walsbyi (strain DSM 16790 / HBSQ001)).